Here is a 277-residue protein sequence, read N- to C-terminus: Energy-coupling factor transporter ATP-binding protein EcfA1 (277 aa).

Residues 5-242 (VKVNNISFEY…IKMLKEIGLD (238 aa)) form the ABC transporter domain. ATP is bound at residue 41 to 48 (GHNGSGKS).

It belongs to the ABC transporter superfamily. Energy-coupling factor EcfA family. In terms of assembly, forms a stable energy-coupling factor (ECF) transporter complex composed of 2 membrane-embedded substrate-binding proteins (S component), 2 ATP-binding proteins (A component) and 2 transmembrane proteins (T component).

It is found in the cell membrane. Functionally, ATP-binding (A) component of a common energy-coupling factor (ECF) ABC-transporter complex. Unlike classic ABC transporters this ECF transporter provides the energy necessary to transport a number of different substrates. The protein is Energy-coupling factor transporter ATP-binding protein EcfA1 of Clostridioides difficile (strain 630) (Peptoclostridium difficile).